Consider the following 289-residue polypeptide: 2-dehydro-3-deoxyphosphooctonate aldolase (289 aa).

Belongs to the KdsA family.

It localises to the cytoplasm. The catalysed reaction is D-arabinose 5-phosphate + phosphoenolpyruvate + H2O = 3-deoxy-alpha-D-manno-2-octulosonate-8-phosphate + phosphate. It participates in carbohydrate biosynthesis; 3-deoxy-D-manno-octulosonate biosynthesis; 3-deoxy-D-manno-octulosonate from D-ribulose 5-phosphate: step 2/3. It functions in the pathway bacterial outer membrane biogenesis; lipopolysaccharide biosynthesis. In Cupriavidus necator (strain ATCC 17699 / DSM 428 / KCTC 22496 / NCIMB 10442 / H16 / Stanier 337) (Ralstonia eutropha), this protein is 2-dehydro-3-deoxyphosphooctonate aldolase.